The chain runs to 632 residues: Chaperone protein DnaK (632 aa).

Residue threonine 198 is modified to Phosphothreonine; by autocatalysis. Residues 599 to 632 form a disordered region; that stretch reads YKKAGASQQGAGSTTQSKKEEDVIEAEVEDKDNK. Residues 604–614 are compositionally biased toward polar residues; the sequence is ASQQGAGSTTQ. The segment covering 620–632 has biased composition (acidic residues); that stretch reads DVIEAEVEDKDNK.

This sequence belongs to the heat shock protein 70 family.

In terms of biological role, acts as a chaperone. This is Chaperone protein DnaK from Thermodesulfovibrio yellowstonii (strain ATCC 51303 / DSM 11347 / YP87).